The chain runs to 521 residues: Glucose-6-phosphate isomerase (521 aa).

E351 acts as the Proton donor in catalysis. Residues H382 and K491 contribute to the active site.

Belongs to the GPI family.

It is found in the cytoplasm. It carries out the reaction alpha-D-glucose 6-phosphate = beta-D-fructose 6-phosphate. Its pathway is carbohydrate biosynthesis; gluconeogenesis. It functions in the pathway carbohydrate degradation; glycolysis; D-glyceraldehyde 3-phosphate and glycerone phosphate from D-glucose: step 2/4. Catalyzes the reversible isomerization of glucose-6-phosphate to fructose-6-phosphate. The protein is Glucose-6-phosphate isomerase of Polaromonas naphthalenivorans (strain CJ2).